A 252-amino-acid chain; its full sequence is MPYIDLNADLGEGFGIWQLGDDDAMLGIVTSANVACGFHAGEPAGLLRVCRAAAERGVRIGAQVGYRDLAGFGRRFIDVDPEDLVAEVVYQIGALQAIAQSCGSTVSYVKPHGALYNTIVTHRDQAAAVAEAVQMVDATLPVLGMTGSVFFQQATDLGLRTVAEAFADRAYRSDGQLVSRREHGAVLADAAAIAQRAVSMVASGKVTAVDGTQVPITMESICVHGDSPGAVQIATAVRDRLTAAGNEIRAFC.

The protein belongs to the LamB/PxpA family. In terms of assembly, forms a complex composed of PxpA, PxpB and PxpC.

It carries out the reaction 5-oxo-L-proline + ATP + 2 H2O = L-glutamate + ADP + phosphate + H(+). Functionally, catalyzes the cleavage of 5-oxoproline to form L-glutamate coupled to the hydrolysis of ATP to ADP and inorganic phosphate. The polypeptide is 5-oxoprolinase subunit A (Mycobacterium marinum (strain ATCC BAA-535 / M)).